The primary structure comprises 205 residues: Regulator of G-protein signaling 4 (205 aa).

3 S-palmitoyl cysteine lipidation sites follow: Cys-2, Cys-12, and Cys-95. Positions 62–178 (SLENLISHEC…LKSRFYLDLV (117 aa)) constitute an RGS domain.

Palmitoylated on Cys-2 and/or Cys-12. Post-translationally, phosphorylated by cyclic GMP-dependent protein kinase.

Functionally, inhibits signal transduction by increasing the GTPase activity of G protein alpha subunits thereby driving them into their inactive GDP-bound form. Activity on G(z)-alpha is inhibited by phosphorylation of the G-protein. Activity on G(z)-alpha and G(i)-alpha-1 is inhibited by palmitoylation of the G-protein. The chain is Regulator of G-protein signaling 4 (RGS4) from Pongo abelii (Sumatran orangutan).